A 441-amino-acid chain; its full sequence is Membrane-bound protease PH1510 (441 aa).

The first 20 residues, 1–20 (MRRILLSMIVLIFLASPILA), serve as a signal peptide directing secretion. 64 to 67 (GGRA) contributes to the substrate binding site. Ser97 serves as the catalytic Nucleophile. Residue 119 to 124 (ACRPIL) participates in substrate binding. Lys138 serves as the catalytic Proton donor/acceptor. Helical transmembrane passes span 239–259 (VAYL…LTPG), 271–291 (IILA…ILLI), 307–327 (FGLF…LLFG), and 344–364 (ILII…MAAV).

This sequence belongs to the peptidase S14 family. As to quaternary structure, homodimer.

The protein resides in the membrane. Inhibited by divalent metal cations, including Mg(2+), Mn(2+), Ca(2+) and Zn(2+). Mildly inhibited by 0.01 % SDS and 0.1% dodecyl-beta-D-maltoside. Activity is nearly abolished by 1 % SDS. Its function is as follows. Protease that cleaves its substrates preferentially near hydrophobic or aromatic amino acid residues. Can degrade casein and the stomatin homolog PH1511 (in vitro). This Pyrococcus horikoshii (strain ATCC 700860 / DSM 12428 / JCM 9974 / NBRC 100139 / OT-3) protein is Membrane-bound protease PH1510.